The following is a 173-amino-acid chain: Cell division protein SepF (173 aa).

Residues 31-82 (FEDFDEPLDERPSRNRSPRDDSRNNAVTDSSDHSPSRNERRSPAPAPATADL) form a disordered region. 2 stretches are compositionally biased toward basic and acidic residues: residues 39 to 53 (DERP…DDSR) and 60 to 72 (SSDH…ERRS).

It belongs to the SepF family. As to quaternary structure, homodimer. Interacts with FtsZ.

The protein localises to the cytoplasm. In terms of biological role, cell division protein that is part of the divisome complex and is recruited early to the Z-ring. Probably stimulates Z-ring formation, perhaps through the cross-linking of FtsZ protofilaments. Its function overlaps with FtsA. The polypeptide is Cell division protein SepF (Thermobifida fusca (strain YX)).